We begin with the raw amino-acid sequence, 336 residues long: Neuropeptides B/W receptor type 2 (336 aa).

The disordered stretch occupies residues 1–25 (MMEATGLEGLESTSSPCPGSTGTGL). Residues 1 to 45 (MMEATGLEGLESTSSPCPGSTGTGLSWDNGTRHNATFPEPLPALY) lie on the Extracellular side of the membrane. Positions 12–25 (STSSPCPGSTGTGL) are enriched in low complexity. Residues N29 and N34 are each glycosylated (N-linked (GlcNAc...) asparagine). The helical transmembrane segment at 46-68 (VLLPVVYSVICAVGLVGNAAVIC) threads the bilayer. At 69-80 (VILRAPKMKTVT) the chain is on the cytoplasmic side. The helical transmembrane segment at 81-103 (HVFILNLAIADGLFTLVLPTNIA) threads the bilayer. Topologically, residues 104 to 127 (EHLLQRWPFGEVLCKLVLAIDHCN) are extracellular. C117 and C197 are oxidised to a cystine. Residues 128-146 (IFSSVYFLAAMSIDRYLVV) form a helical membrane-spanning segment. At 147–165 (LATARSRRMPRRTVHRAKV) the chain is on the cytoplasmic side. A helical membrane pass occupies residues 166-188 (ASLCVWLGVTVAVLPFLTFAGVY). At 189–213 (NNELQVTSCGLSFPRPERAWFQASR) the chain is on the extracellular side. Residues 214–236 (IYTLVLGFVVPMCTLCVLYADLL) form a helical membrane-spanning segment. Residues 237–256 (RRLRALRLHSGAKALGKAKR) lie on the Cytoplasmic side of the membrane. A helical transmembrane segment spans residues 257–279 (KVSLLVLAVLAVGLLCWTPFHLA). Over 280-293 (SIVALTTDLPQTPL) the chain is Extracellular. Residues 294 to 316 (VIIVSYVVTSLSYTSSCLNPFLY) traverse the membrane as a helical segment. The Cytoplasmic segment spans residues 317–336 (AFLDHSFRKSLRTACRCQGA).

The protein belongs to the G-protein coupled receptor 1 family.

It is found in the cell membrane. In terms of biological role, interacts specifically with a number of opioid ligands. Receptor for neuropeptides B and W, which may be involved in neuroendocrine system regulation, food intake and the organization of other signals. This is Neuropeptides B/W receptor type 2 (NPBWR2) from Bos taurus (Bovine).